We begin with the raw amino-acid sequence, 93 residues long: Large ribosomal subunit protein uL23cz/uL23cy (93 aa).

The protein belongs to the universal ribosomal protein uL23 family. Part of the 50S ribosomal subunit.

It localises to the plastid. The protein resides in the chloroplast. Its function is as follows. Binds to 23S rRNA. This chain is Large ribosomal subunit protein uL23cz/uL23cy (rpl23-A), found in Acorus calamus (Sweet flag).